The chain runs to 735 residues: Funoran endo-beta-hydrolase (735 aa).

An N-terminal signal peptide occupies residues 1–27 (MRVKSVYKKLSVSFILVMLSASQEVNS). The active-site Proton donor is Glu-200. The active-site Nucleophile is the Glu-322.

This sequence belongs to the glycosyl hydrolase 86 family.

It catalyses the reaction Endohydrolysis of beta-(1-&gt;4)-linkages between beta-D-galactopyranose-6-sulfate and 3,6-anhydro-alpha-L-galactopyranose units in funoran.. The catalysed reaction is Hydrolysis of (1-&gt;4)-beta-D-galactosidic linkages in agarose, giving the tetramer as the predominant product.. With respect to regulation, agarase activity is enhanced in the presence of NaCl. Agarase activity is significantly inhibited by Zn(2+) and slightly activated by several divalent ions including Mg(2+), Cd(2+) and Ca(2+). Functionally, endohydrolase that cleaves the beta-1,4 glycosidic bond between beta-D-galactopyranose-6-sulfate (G6S) and 3,6-anhydro-alpha-L-galactopyranose (LA) unit of funoran, a polysaccharide produced by red algae of the genus Gloiopeltis. It releases the disaccharide LA-G6S as the predominant end product. Also acts as a random endo-acting beta-agarase, which can hydrolyze agarose tetrasaccharides and hexasaccharides, and produces disaccharides as smallest products. Besides typical agarose oligosaccharides, it can use methylated galactoses. The enzyme exhibits higher catalytic efficiency towards agarose, but binds funoran preferentially. Has no activity on porphyran. The chain is Funoran endo-beta-hydrolase from Wenyingzhuangia aestuarii.